Here is a 159-residue protein sequence, read N- to C-terminus: Keratin-associated protein 9-3 (159 aa).

16 repeat units span residues 8-12 (CCQPT), 13-17 (CCRTT), 32-36 (CCQPS), 37-41 (CCVSS), 46-50 (CCHPT), 51-55 (CCQNT), 56-60 (CCRTT), 61-65 (CCQPI), 70-74 (CCQPS), 75-79 (CCSTP), 80-84 (CCQPT), 85-89 (CCGSS), 129-133 (CCRPA), 134-138 (CCETT), 139-143 (CCRTT), and 153-157 (CCQPS). A 16 X 5 AA repeats of C-C-[RQVSHE]-[SPTN]-[TASPI] region spans residues 8-157 (CCQPTCCRTT…TCVYSCCQPS (150 aa)).

It belongs to the KRTAP type 9 family. In terms of assembly, interacts with hair keratins.

In the hair cortex, hair keratin intermediate filaments are embedded in an interfilamentous matrix, consisting of hair keratin-associated proteins (KRTAP), which are essential for the formation of a rigid and resistant hair shaft through their extensive disulfide bond cross-linking with abundant cysteine residues of hair keratins. The matrix proteins include the high-sulfur and high-glycine-tyrosine keratins. The polypeptide is Keratin-associated protein 9-3 (KRTAP9-3) (Homo sapiens (Human)).